A 356-amino-acid polypeptide reads, in one-letter code: DNA polymerase IV (356 aa).

The UmuC domain maps to 1–188 (MDTSRKIIHI…IPVTKFYGVG (188 aa)). The Mg(2+) site is built by Asp-11 and Asp-106. The active site involves Glu-107.

It belongs to the DNA polymerase type-Y family. In terms of assembly, monomer. The cofactor is Mg(2+).

It localises to the cytoplasm. It catalyses the reaction DNA(n) + a 2'-deoxyribonucleoside 5'-triphosphate = DNA(n+1) + diphosphate. In terms of biological role, poorly processive, error-prone DNA polymerase involved in untargeted mutagenesis. Copies undamaged DNA at stalled replication forks, which arise in vivo from mismatched or misaligned primer ends. These misaligned primers can be extended by PolIV. Exhibits no 3'-5' exonuclease (proofreading) activity. May be involved in translesional synthesis, in conjunction with the beta clamp from PolIII. This is DNA polymerase IV from Listeria monocytogenes serovar 1/2a (strain ATCC BAA-679 / EGD-e).